The following is a 346-amino-acid chain: Annexin A1 (346 aa).

The residue at position 2 (A2) is an N-acetylalanine. S5 is subject to Phosphoserine; by TRPM7. Residue Q19 forms an Isoglutamyl lysine isopeptide (Gln-Lys) (interchain with K-?) linkage. Y21 carries the post-translational modification Phosphotyrosine; by EGFR. S27 carries the post-translational modification Phosphoserine; by PKC. 2 positions are modified to phosphoserine: S34 and S37. Residue T41 is modified to Phosphothreonine. Annexin repeat units follow at residues 42-113 (FNPS…ALLK), 114-185 (TPAQ…SLAK), 197-269 (DLAD…AIVK), and 273-344 (SKPA…ALCG). K58 is modified (N6-acetyllysine). The Ca(2+) site is built by G59, V60, E62, K97, L100, E105, M127, G129, G131, T132, and E134. Position 136 is a phosphothreonine (T136). Positions 171, 210, and 213 each coordinate Ca(2+). Residue K214 forms a Glycyl lysine isopeptide (Lys-Gly) (interchain with G-Cter in SUMO1); alternate linkage. K214 participates in a covalent cross-link: Glycyl lysine isopeptide (Lys-Gly) (interchain with G-Cter in SUMO2); alternate. A Ca(2+)-binding site is contributed by G215. The residue at position 239 (K239) is an N6-acetyllysine. Residues D253, E255, and L256 each contribute to the Ca(2+) site. K257 participates in a covalent cross-link: Glycyl lysine isopeptide (Lys-Gly) (interchain with G-Cter in SUMO1). E261, M286, G288, and G290 together coordinate Ca(2+). Position 312 is an N6-acetyllysine (K312). C324 and C343 are disulfide-bonded. Ca(2+) contacts are provided by L328, E330, and T331. Residue K332 forms a Glycyl lysine isopeptide (Lys-Gly) (interchain with G-Cter in SUMO1) linkage. E336 contributes to the Ca(2+) binding site.

Belongs to the annexin family. As to quaternary structure, homodimer; non-covalently linked. Homodimer; linked by transglutamylation. Homodimers linked by transglutamylation are observed in placenta, but not in other tissues. Interacts with S100A11. Heterotetramer, formed by two molecules each of S100A11 and ANXA1. Interacts with DYSF. Interacts with EGFR. In terms of processing, phosphorylated by protein kinase C, EGFR and TRPM7. Phosphorylated in response to EGF treatment. Sumoylated. Post-translationally, proteolytically cleaved by cathepsin CTSG to release the active N-terminal peptide Ac2-26.

It is found in the nucleus. The protein localises to the cytoplasm. Its subcellular location is the cell projection. It localises to the cilium. The protein resides in the basolateral cell membrane. It is found in the lateral cell membrane. The protein localises to the cell membrane. Its subcellular location is the apical cell membrane. It localises to the membrane. The protein resides in the early endosome. It is found in the cytoplasmic vesicle membrane. The protein localises to the endosome membrane. Its subcellular location is the secreted. It localises to the extracellular space. The protein resides in the extracellular exosome. It is found in the cytoplasmic vesicle. The protein localises to the secretory vesicle lumen. Its subcellular location is the phagocytic cup. Plays important roles in the innate immune response as effector of glucocorticoid-mediated responses and regulator of the inflammatory process. Has anti-inflammatory activity. Plays a role in glucocorticoid-mediated down-regulation of the early phase of the inflammatory response. Contributes to the adaptive immune response by enhancing signaling cascades that are triggered by T-cell activation, regulates differentiation and proliferation of activated T-cells. Promotes the differentiation of T-cells into Th1 cells and negatively regulates differentiation into Th2 cells. Has no effect on unstimulated T-cells. Negatively regulates hormone exocytosis via activation of the formyl peptide receptors and reorganization of the actin cytoskeleton. Has high affinity for Ca(2+) and can bind up to eight Ca(2+) ions. Displays Ca(2+)-dependent binding to phospholipid membranes. Plays a role in the formation of phagocytic cups and phagosomes. Plays a role in phagocytosis by mediating the Ca(2+)-dependent interaction between phagosomes and the actin cytoskeleton. Functionally, functions at least in part by activating the formyl peptide receptors and downstream signaling cascades. Promotes chemotaxis of granulocytes and monocytes via activation of the formyl peptide receptors. Promotes rearrangement of the actin cytoskeleton, cell polarization and cell migration. Promotes resolution of inflammation and wound healing. Acts via neutrophil N-formyl peptide receptors to enhance the release of CXCL2. The protein is Annexin A1 (ANXA1) of Pan troglodytes (Chimpanzee).